The chain runs to 211 residues: Thiamine-phosphate synthase (211 aa).

4-amino-2-methyl-5-(diphosphooxymethyl)pyrimidine-binding positions include 37-41 (QLRIK) and N69. Mg(2+) contacts are provided by D70 and D89. Residue S108 coordinates 4-amino-2-methyl-5-(diphosphooxymethyl)pyrimidine. 134 to 136 (TQT) is a 2-[(2R,5Z)-2-carboxy-4-methylthiazol-5(2H)-ylidene]ethyl phosphate binding site. 4-amino-2-methyl-5-(diphosphooxymethyl)pyrimidine is bound at residue K137. Residues G166 and 186-187 (VS) each bind 2-[(2R,5Z)-2-carboxy-4-methylthiazol-5(2H)-ylidene]ethyl phosphate.

The protein belongs to the thiamine-phosphate synthase family. Mg(2+) serves as cofactor.

It carries out the reaction 2-[(2R,5Z)-2-carboxy-4-methylthiazol-5(2H)-ylidene]ethyl phosphate + 4-amino-2-methyl-5-(diphosphooxymethyl)pyrimidine + 2 H(+) = thiamine phosphate + CO2 + diphosphate. It catalyses the reaction 2-(2-carboxy-4-methylthiazol-5-yl)ethyl phosphate + 4-amino-2-methyl-5-(diphosphooxymethyl)pyrimidine + 2 H(+) = thiamine phosphate + CO2 + diphosphate. The enzyme catalyses 4-methyl-5-(2-phosphooxyethyl)-thiazole + 4-amino-2-methyl-5-(diphosphooxymethyl)pyrimidine + H(+) = thiamine phosphate + diphosphate. It functions in the pathway cofactor biosynthesis; thiamine diphosphate biosynthesis; thiamine phosphate from 4-amino-2-methyl-5-diphosphomethylpyrimidine and 4-methyl-5-(2-phosphoethyl)-thiazole: step 1/1. Its function is as follows. Condenses 4-methyl-5-(beta-hydroxyethyl)thiazole monophosphate (THZ-P) and 2-methyl-4-amino-5-hydroxymethyl pyrimidine pyrophosphate (HMP-PP) to form thiamine monophosphate (TMP). The chain is Thiamine-phosphate synthase from Shigella dysenteriae serotype 1 (strain Sd197).